A 220-amino-acid polypeptide reads, in one-letter code: Thioredoxin domain-containing protein (220 aa).

The signal sequence occupies residues 1 to 19; sequence MKFLILNCLILFSLISSEA. The Thioredoxin domain maps to 20-141; that stretch reads TNVKLDREDQ…SEFALGDFKN (122 aa). At 20 to 181 the chain is on the lumenal side; sequence TNVKLDREDQ…YDAALAGFVT (162 aa). The cysteines at positions 64 and 67 are disulfide-linked. Residues 182 to 202 traverse the membrane as a helical segment; that stretch reads ISSFSFLFGLLVGLMLSLFLF. The Cytoplasmic segment spans residues 203 to 220; it reads TRRATRKPKVLTERKKDK. The Di-lysine motif signature appears at 217-220; it reads KKDK.

This sequence belongs to the protein disulfide isomerase family.

It localises to the endoplasmic reticulum membrane. This is Thioredoxin domain-containing protein from Theileria parva (East coast fever infection agent).